Reading from the N-terminus, the 263-residue chain is Undecaprenyl-diphosphatase (263 aa).

The next 7 helical transmembrane spans lie at 38–58 (RSDF…CLAL), 75–95 (RDYV…GLIV), 108–128 (PVAW…HFAG), 135–155 (VVTW…GVFP), 181–201 (FVFM…LLEM), 217–237 (VAFI…LGYI), and 242–262 (FTVF…WLPA).

Belongs to the UppP family.

It is found in the cell inner membrane. It carries out the reaction di-trans,octa-cis-undecaprenyl diphosphate + H2O = di-trans,octa-cis-undecaprenyl phosphate + phosphate + H(+). Catalyzes the dephosphorylation of undecaprenyl diphosphate (UPP). Confers resistance to bacitracin. This chain is Undecaprenyl-diphosphatase, found in Xanthomonas campestris pv. campestris (strain 8004).